Consider the following 1616-residue polypeptide: MPARTAPARVPTLAVPAISLPDDVRRRLKDLERDSLTEKECVKEKLNLLHEFLQTEIKNQLCDLETKLRKEELSEEGYLAKVKSLLNKDLSLENGAHAYNREVNGRLENGNQARSEARRVGMADANSPPKPLSKPRTPRRSKSDGEAKPEPSPSPRITRKSTRQTTITSHFAKGPAKRKPQEESERAKSDESIKEEDKDQDEKRRRVTSRERVARPLPAEEPERAKSGTRTEKEEERDEKEEKRLRSQTKEPTPKQKLKEEPDREARAGVQADEDEDGDEKDEKKHRSQPKDLAAKRRPEEKEPEKVNPQISDEKDEDEKEEKRRKTTPKEPTEKKMARAKTVMNSKTHPPKCIQCGQYLDDPDLKYGQHPPDAVDEPQMLTNEKLSIFDANESGFESYEALPQHKLTCFSVYCKHGHLCPIDTGLIEKNIELFFSGSAKPIYDDDPSLEGGVNGKNLGPINEWWITGFDGGEKALIGFSTSFAEYILMDPSPEYAPIFGLMQEKIYISKIVVEFLQSNSDSTYEDLINKIETTVPPSGLNLNRFTEDSLLRHAQFVVEQVESYDEAGDSDEQPIFLTPCMRDLIKLAGVTLGQRRAQARRQTIRHSTREKDRGPTKATTTKLVYQIFDTFFAEQIEKDDREDKENAFKRRRCGVCEVCQQPECGKCKACKDMVKFGGSGRSKQACQERRCPNMAMKEADDDEEVDDNIPEMPSPKKMHQGKKKKQNKNRISWVGEAVKTDGKKSYYKKVCIDAETLEVGDCVSVIPDDSSKPLYLARVTALWEDSSNGQMFHAHWFCAGTDTVLGATSDPLELFLVDECEDMQLSYIHSKVKVIYKAPSENWAMEGGMDPESLLEGDDGKTYFYQLWYDQDYARFESPPKTQPTEDNKFKFCVSCARLAEMRQKEIPRVLEQLEDLDSRVLYYSATKNGILYRVGDGVYLPPEAFTFNIKLSSPVKRPRKEPVDEDLYPEHYRKYSDYIKGSNLDAPEPYRIGRIKEIFCPKKSNGRPNETDIKIRVNKFYRPENTHKSTPASYHADINLLYWSDEEAVVDFKAVQGRCTVEYGEDLPECVQVYSMGGPNRFYFLEAYNAKSKSFEDPPNHARSPGNKGKGKGKGKGKPKSQACEPSEPEIEIKLPKLRTLDVFSGCGGLSEGFHQAGISDTLWAIEMWDPAAQAFRLNNPGSTVFTEDCNILLKLVMAGETTNSRGQRLPQKGDVEMLCGGPPCQGFSGMNRFNSRTYSKFKNSLVVSFLSYCDYYRPRFFLLENVRNFVSFKRSMVLKLTLRCLVRMGYQCTFGVLQAGQYGVAQTRRRAIILAAAPGEKLPLFPEPLHVFAPRACQLSVVVDDKKFVSNITRLSSGPFRTITVRDTMSDLPEVRNGASALEISYNGEPQSWFQRQLRGAQYQPILRDHICKDMSALVAARMRHIPLAPGSDWRDLPNIEVRLSDGTMARKLRYTHHDRKNGRSSSGALRGVCSCVEAGKACDPAARQFNTLIPWCLPHTGNRHNHWAGLYGRLEWDGFFSTTVTNPEPMGKQGRVLHPEQHRVVSVRECARSQGFPDTYRLFGNILDKHRQVGNAVPPPLAKAIGLEIKLCMLAKARESASAKIKEEEAAKD.

The tract at residues Met-1 to Val-120 is interaction with DMAP1. An interaction with DNMT3A region spans residues Met-1–Lys-148. Interaction with the PRC2/EED-EZH2 complex regions lie at residues Met-1–Lys-336 and Asn-308–His-606. Residues Pro-16–Asn-109 enclose the DMAP1-binding domain. Lys-70 is subject to N6,N6-dimethyllysine. Residues Val-103 to His-349 are disordered. Residues Ser-127 and Ser-133 each carry the phosphoserine modification. A Phosphothreonine modification is found at Thr-137. Position 141 is a phosphoserine (Ser-141). Lys-142 is modified (N6-methyllysine; by SETD7). The residue at position 143 (Ser-143) is a Phosphoserine; by PKB/AKT1. The interaction with DNMT3B stretch occupies residues Pro-149–Leu-217. Ser-152 and Ser-154 each carry phosphoserine. Lys-160 is modified (N6-acetyllysine). Positions Arg-163–Gly-174 are interaction with PCNA. A Phosphothreonine modification is found at Thr-166. 2 positions are modified to N6-acetyllysine: Lys-173 and Lys-188. The Nuclear localization signal motif lies at Lys-177–Arg-205. 3 stretches are compositionally biased toward basic and acidic residues: residues Lys-179 to Ala-214, Glu-221 to Arg-267, and Lys-281 to Lys-306. Lys-259 is modified (N6-acetyllysine; alternate). Lys-259 participates in a covalent cross-link: Glycyl lysine isopeptide (Lys-Gly) (interchain with G-Cter in SUMO2); alternate. The interval Gln-310–Met-502 is homodimerization. Ser-312 carries the phosphoserine modification. Positions Glu-321 to Met-337 are enriched in basic and acidic residues. Positions Glu-331–Leu-550 are DNA replication foci-targeting sequence. Residues Cys-353 and Cys-356 each coordinate Zn(2+). The residue at position 366 (Lys-366) is an N6-acetyllysine. Phosphoserine is present on residues Ser-394 and Ser-398. Residues Cys-414 and His-418 each contribute to the Zn(2+) site. Residues Ser-509 and Ser-549 each carry the phosphoserine modification. The CXXC-type zinc finger occupies Asn-646–Pro-692. The interval Arg-651 to Lys-697 is required for activity. Cys-653, Cys-656, Cys-659, Cys-664, Cys-667, Cys-670, Cys-686, and Cys-691 together coordinate Zn(2+). The autoinhibitory linker stretch occupies residues Asn-693 to Ala-754. The span at Ala-699–Ile-709 shows a compositional bias: acidic residues. Residues Ala-699–Asn-729 are disordered. Ser-714 is modified (phosphoserine). Over residues Lys-716–Lys-728 the composition is skewed to basic residues. Residue Ser-732 is modified to Phosphoserine. Residue Lys-749 is modified to N6-acetyllysine. The 126-residue stretch at Glu-755–Pro-880 folds into the BAH 1 domain. Position 878 is a phosphoserine (Ser-878). Lys-891, Lys-957, Lys-961, Lys-975, and Lys-1054 each carry N6-acetyllysine. The BAH 2 domain occupies His-972 to Pro-1100. The interval Ser-1095 to Pro-1130 is disordered. 5 tandem repeats follow at residues Lys-1109–Gly-1110, Lys-1111–Gly-1112, Lys-1113–Gly-1114, Lys-1115–Gly-1116, and Lys-1117–Gly-1118. The interval Lys-1109–Pro-1120 is 6 X 2 AA tandem repeats of K-G. Residues Gly-1110 to Pro-1120 show a composition bias toward basic residues. Residues Lys-1111, Lys-1113, and Lys-1115 each carry the N6-acetyllysine modification. Position 1117 is an N6-acetyllysine; by EHMT2 (Lys-1117). 2 positions are modified to N6-acetyllysine: Lys-1119 and Lys-1121. A 6; approximate repeat occupies Lys-1119–Pro-1120. The segment at Lys-1121–Asp-1616 is interaction with the PRC2/EED-EZH2 complex. One can recognise an SAM-dependent MTase C5-type domain in the interval Leu-1139–Lys-1599. The segment at Leu-1139–Asp-1616 is catalytic. Residues Ser-1146, Gly-1150–Leu-1151, Glu-1168–Met-1169, Asp-1190–Cys-1191, and Cys-1191 contribute to the S-adenosyl-L-methionine site. Residue Cys-1226 is part of the active site. N6-acetyllysine is present on residues Lys-1349 and Lys-1415. The S-adenosyl-L-methionine site is built by Asn-1578 and Val-1580. Residue Lys-1609 forms a Glycyl lysine isopeptide (Lys-Gly) (interchain with G-Cter in SUMO2) linkage.

It belongs to the class I-like SAM-binding methyltransferase superfamily. C5-methyltransferase family. As to quaternary structure, homodimer. Forms a stable complex with E2F1, BB1 and HDAC1. Forms a complex with DMAP1 and HDAC2, with direct interaction. Interacts with the PRC2/EED-EZH2 complex. Probably part of a corepressor complex containing ZNF304, TRIM28, SETDB1 and DNMT1. Interacts with UHRF1; promoting its recruitment to hemimethylated DNA. Interacts with USP7, promoting its deubiquitination. Interacts with PCNA. Interacts with MBD2 and MBD3. Interacts with DNMT3A and DNMT3B. Interacts with UBC9. Interacts with CSNK1D. Interacts with HDAC1. Interacts with BAZ2A/TIP5. Interacts with SIRT7. Interacts with ZNF263; recruited to the SIX3 promoter along with other proteins involved in chromatin modification and transcriptional corepression where it contributes to transcriptional repression. Interacts with L3MBTL3 and DCAF5; the interaction requires DNMT1 methylation at Lys-142 and is necessary to target DNMT1 for ubiquitination by the CRL4-DCAF5 E3 ubiquitin ligase complex and proteasomal degradation. Interacts with PHF20L1; the interaction requires DNMT1 methylation at Lys-142 and protects DNMT1 from ubiquitination and proteasomal degradation. Sumoylated; sumoylation increases activity. Post-translationally, acetylation on multiple lysines, mainly by KAT2B/PCAF, regulates cell cycle G(2)/M transition. Deacetylation of Lys-1349 and Lys-1415 by SIRT1 increases methyltransferase activity. In terms of processing, phosphorylation of Ser-154 by CDKs is important for enzymatic activity and protein stability. Phosphorylation of Ser-143 by AKT1 prevents methylation by SETD7 thereby increasing DNMT1 stability. Methylation at Lys-142 by SETD7 is necessary for the regulation of DNMT1 proteasomal degradation. Post-translationally, ubiquitinated by UHRF1; interaction with USP7 counteracts ubiquitination by UHRF1 by promoting deubiquitination and preventing degradation by the proteasome. As to expression, ubiquitous; highly expressed in fetal tissues, heart, kidney, placenta, peripheral blood mononuclear cells, and expressed at lower levels in spleen, lung, brain, small intestine, colon, liver, and skeletal muscle. Isoform 2 is less expressed than isoform 1.

Its subcellular location is the nucleus. It catalyses the reaction a 2'-deoxycytidine in DNA + S-adenosyl-L-methionine = a 5-methyl-2'-deoxycytidine in DNA + S-adenosyl-L-homocysteine + H(+). Its function is as follows. Methylates CpG residues. Preferentially methylates hemimethylated DNA. Associates with DNA replication sites in S phase maintaining the methylation pattern in the newly synthesized strand, that is essential for epigenetic inheritance. Associates with chromatin during G2 and M phases to maintain DNA methylation independently of replication. It is responsible for maintaining methylation patterns established in development. DNA methylation is coordinated with methylation of histones. Mediates transcriptional repression by direct binding to HDAC2. In association with DNMT3B and via the recruitment of CTCFL/BORIS, involved in activation of BAG1 gene expression by modulating dimethylation of promoter histone H3 at H3K4 and H3K9. Probably forms a corepressor complex required for activated KRAS-mediated promoter hypermethylation and transcriptional silencing of tumor suppressor genes (TSGs) or other tumor-related genes in colorectal cancer (CRC) cells. Also required to maintain a transcriptionally repressive state of genes in undifferentiated embryonic stem cells (ESCs). Associates at promoter regions of tumor suppressor genes (TSGs) leading to their gene silencing. Promotes tumor growth. The polypeptide is DNA (cytosine-5)-methyltransferase 1 (DNMT1) (Homo sapiens (Human)).